Reading from the N-terminus, the 1076-residue chain is Carbamoyl phosphate synthase large chain (1076 aa).

The interval 1–403 (MPKRTDIQSI…SLQKALRGLE (403 aa)) is carboxyphosphate synthetic domain. ATP-binding residues include Arg129, Arg169, Gly175, Gly176, Glu208, Leu210, Glu215, Gly241, Val242, His243, Gln285, and Glu299. Positions 133–328 (DQAMKRIGLE…IAKIAAKLAV (196 aa)) constitute an ATP-grasp 1 domain. Gln285, Glu299, and Asn301 together coordinate Mg(2+). Positions 285, 299, and 301 each coordinate Mn(2+). The segment at 404–553 (TGNDGLDPKV…YSSYEEECEA (150 aa)) is oligomerization domain. Residues 554–935 (EVSDRPKIMV…AFYKAQLGAG (382 aa)) are carbamoyl phosphate synthetic domain. The ATP-grasp 2 domain occupies 678–869 (QHMVDKLGLK…LAQVAARCMA (192 aa)). Arg714, His753, Leu755, Glu760, Gly785, Val786, His787, Ser788, Gln828, and Glu840 together coordinate ATP. Gln828, Glu840, and Asn842 together coordinate Mg(2+). Gln828, Glu840, and Asn842 together coordinate Mn(2+). In terms of domain architecture, MGS-like spans 936 to 1076 (EAIPALEGER…LQELHAGVSQ (141 aa)). An allosteric domain region spans residues 936–1076 (EAIPALEGER…LQELHAGVSQ (141 aa)).

The protein belongs to the CarB family. Composed of two chains; the small (or glutamine) chain promotes the hydrolysis of glutamine to ammonia, which is used by the large (or ammonia) chain to synthesize carbamoyl phosphate. Tetramer of heterodimers (alpha,beta)4. It depends on Mg(2+) as a cofactor. Requires Mn(2+) as cofactor.

It carries out the reaction hydrogencarbonate + L-glutamine + 2 ATP + H2O = carbamoyl phosphate + L-glutamate + 2 ADP + phosphate + 2 H(+). The enzyme catalyses hydrogencarbonate + NH4(+) + 2 ATP = carbamoyl phosphate + 2 ADP + phosphate + 2 H(+). Its pathway is amino-acid biosynthesis; L-arginine biosynthesis; carbamoyl phosphate from bicarbonate: step 1/1. It functions in the pathway pyrimidine metabolism; UMP biosynthesis via de novo pathway; (S)-dihydroorotate from bicarbonate: step 1/3. Large subunit of the glutamine-dependent carbamoyl phosphate synthetase (CPSase). CPSase catalyzes the formation of carbamoyl phosphate from the ammonia moiety of glutamine, carbonate, and phosphate donated by ATP, constituting the first step of 2 biosynthetic pathways, one leading to arginine and/or urea and the other to pyrimidine nucleotides. The large subunit (synthetase) binds the substrates ammonia (free or transferred from glutamine from the small subunit), hydrogencarbonate and ATP and carries out an ATP-coupled ligase reaction, activating hydrogencarbonate by forming carboxy phosphate which reacts with ammonia to form carbamoyl phosphate. The polypeptide is Carbamoyl phosphate synthase large chain (Halomonas eurihalina).